We begin with the raw amino-acid sequence, 417 residues long: Argininosuccinate synthase (417 aa).

8 to 16 (AYSGGLDTS) contributes to the ATP binding site. Tyr-87 serves as a coordination point for L-citrulline. Gly-117 lines the ATP pocket. Thr-119, Asn-123, and Asp-124 together coordinate L-aspartate. Residue Asn-123 participates in L-citrulline binding. Residues Arg-127, Ser-175, Glu-259, and Tyr-271 each coordinate L-citrulline.

The protein belongs to the argininosuccinate synthase family. Type 1 subfamily. Homotetramer.

The protein localises to the cytoplasm. The enzyme catalyses L-citrulline + L-aspartate + ATP = 2-(N(omega)-L-arginino)succinate + AMP + diphosphate + H(+). Its pathway is amino-acid biosynthesis; L-arginine biosynthesis; L-arginine from L-ornithine and carbamoyl phosphate: step 2/3. The chain is Argininosuccinate synthase from Clavibacter sepedonicus (Clavibacter michiganensis subsp. sepedonicus).